A 727-amino-acid chain; its full sequence is Glycerol-3-phosphate dehydrogenase, mitochondrial (727 aa).

The N-terminal 42 residues, 1–42 (MAFQKVVKGTILMGGGALATVLGLSQFAHYRRKQVSLAYVEA), are a transit peptide targeting the mitochondrion. 71 to 99 (DILVIGGGATGCGCALDAVTRGLKTALVE) lines the FAD pocket. The residue at position 601 (Tyr601) is a Phosphotyrosine. 2 consecutive EF-hand domains span residues 623–658 (PDID…INVQ) and 659–694 (MDED…VHTG). Ca(2+) contacts are provided by Asp672, Asn674, Asn676, Gln678, and Glu683.

Belongs to the FAD-dependent glycerol-3-phosphate dehydrogenase family. Requires FAD as cofactor.

It is found in the mitochondrion. It carries out the reaction a quinone + sn-glycerol 3-phosphate = dihydroxyacetone phosphate + a quinol. The protein operates within polyol metabolism; glycerol degradation via glycerol kinase pathway; glycerone phosphate from sn-glycerol 3-phosphate (anaerobic route): step 1/1. Its activity is regulated as follows. Calcium-binding enhance the activity of the enzyme. Its function is as follows. Calcium-responsive mitochondrial glycerol-3-phosphate dehydrogenase which seems to be a key component of the pancreatic beta-cell glucose-sensing device. The protein is Glycerol-3-phosphate dehydrogenase, mitochondrial of Rattus norvegicus (Rat).